Consider the following 244-residue polypeptide: Probable transcriptional regulatory protein TT_C0469 (244 aa).

The protein belongs to the TACO1 family.

It is found in the cytoplasm. The protein is Probable transcriptional regulatory protein TT_C0469 of Thermus thermophilus (strain ATCC BAA-163 / DSM 7039 / HB27).